The primary structure comprises 351 residues: Dysbindin (351 aa).

Serine 11 is subject to Phosphoserine. Residues 88-181 are a coiled coil; that stretch reads EKKKTSLVEL…ELDAEHAQKV (94 aa). The segment at 173 to 331 is dysbindin; sequence LDAEHAQKVL…DEEEVQVDTA (159 aa). The Nuclear export signal motif lies at 243-256; the sequence is LMDISDQEALDVFL. The interval 286 to 351 is disordered; the sequence is PNPSELRAKP…TPDGGEDSDS (66 aa). A compositionally biased stretch (polar residues) spans 296–305; the sequence is PSSSSTCTDS. Phosphoserine occurs at positions 316, 321, and 349.

The protein belongs to the dysbindin family. As to quaternary structure, interacts (via its coiled coil domain) with KXD1. Interacts with CMYA5, PI4K2 and RNF151. Component of the biogenesis of lysosome-related organelles complex 1 (BLOC-1) composed of at least BLOC1S1, BLOC1S2, BLOC1S3, BLOC1S4, BLOC1S5, BLOC1S6, DTNBP1/BLOC1S7 and SNAPIN/BLOC1S8. Interacts directly in the complex with BLOC1S5, BLOC1S6 and SNAPIN/BLOC1S8. The BLOC-1 complex associates with the AP-3 protein complex and membrane protein cargos. This BLOC-1 complex also associates with the BLOC-2 complex in endosomes. Binds to DTNA and DTNB but may not be a physiological binding partner. Interacts (isoform 1 and isoform 2 only) with the DNA-dependent protein kinase complex DNA-PK; the interaction phosphorylates DTNBP1 in vitro. Interacts directly in this complex with XRCC5 and XRCC6. Interacts with AP3M1, AP3B2 and TRIM32. Interacts with XPO1; the interaction exports DTNBP1 out of the nucleus. Ubiquitinated by TRIM32. Ubiquitination leads to DTNBP1 degradation. In terms of processing, isoforms 1 and 2 highly phosphorylated by PRKDC in vitro. Isoform 3 only weakly phosphorylated by PRKDC in vitro. Detected in brain, in neurons and in neuropil. Isoform 1 is expressed in the cerebral cortex, and hippocampal frontal (HF). Specific expression in the posterior half of the superior temporal gyrus (pSTG). Higher expression of isoform 2 and 3 in the HF than in the pSTG while isoform 1 shows no difference in expression in these areas. In the HF, detected in dentate gyrus (DG) and in pyramidal cells of hippocampus CA2 and CA3 (at protein level). Expressed in all principal neuronal populations of the HF, namely pyramidal neurons in the subiculum and CA1-3, granule cells in the dense cell layer of the DG (DGg), and polymorph cells in the hilus of the DG (DGh). Maximal levels in CA2, CA3, and DGh. Isoform 2 not expressed in the cerebral cortex.

It localises to the cytoplasm. Its subcellular location is the cytoplasmic vesicle membrane. It is found in the endosome membrane. The protein localises to the melanosome membrane. The protein resides in the postsynaptic density. It localises to the endoplasmic reticulum. Its subcellular location is the nucleus. It is found in the cytoplasmic vesicle. The protein localises to the secretory vesicle. The protein resides in the synaptic vesicle membrane. It localises to the postsynaptic cell membrane. Component of the BLOC-1 complex, a complex that is required for normal biogenesis of lysosome-related organelles (LRO), such as platelet dense granules and melanosomes. In concert with the AP-3 complex, the BLOC-1 complex is required to target membrane protein cargos into vesicles assembled at cell bodies for delivery into neurites and nerve terminals. The BLOC-1 complex, in association with SNARE proteins, is also proposed to be involved in neurite extension. Associates with the BLOC-2 complex to facilitate the transport of TYRP1 independent of AP-3 function. Plays a role in synaptic vesicle trafficking and in neurotransmitter release. Plays a role in the regulation of cell surface exposure of DRD2. May play a role in actin cytoskeleton reorganization and neurite outgrowth. May modulate MAPK8 phosphorylation. Appears to promote neuronal transmission and viability through regulating the expression of SNAP25 and SYN1, modulating PI3-kinase-Akt signaling and influencing glutamatergic release. Regulates the expression of SYN1 through binding to its promoter. Modulates prefrontal cortical activity via the dopamine/D2 pathway. This is Dysbindin (DTNBP1) from Homo sapiens (Human).